The sequence spans 309 residues: Probable manganese-dependent inorganic pyrophosphatase (309 aa).

6 residues coordinate Mn(2+): His-9, Asp-13, Asp-15, Asp-75, His-97, and Asp-149.

This sequence belongs to the PPase class C family. Requires Mn(2+) as cofactor.

The protein resides in the cytoplasm. It catalyses the reaction diphosphate + H2O = 2 phosphate + H(+). The chain is Probable manganese-dependent inorganic pyrophosphatase from Staphylococcus saprophyticus subsp. saprophyticus (strain ATCC 15305 / DSM 20229 / NCIMB 8711 / NCTC 7292 / S-41).